Consider the following 266-residue polypeptide: Small ribosomal subunit protein eS1 (266 aa).

Residues 235 to 266 are disordered; sequence GGAGGAAKASGDDTGAKVERADGYEPPIQETV. Over residues 244–257 the composition is skewed to basic and acidic residues; that stretch reads SGDDTGAKVERADG.

Belongs to the eukaryotic ribosomal protein eS1 family. As to quaternary structure, component of the small ribosomal subunit. Mature ribosomes consist of a small (40S) and a large (60S) subunit. The 40S subunit contains about 33 different proteins and 1 molecule of RNA (18S). The 60S subunit contains about 49 different proteins and 3 molecules of RNA (28S, 5.8S and 5S).

The protein localises to the cytoplasm. Component of the small ribosomal subunit. The ribosome is a large ribonucleoprotein complex responsible for the synthesis of proteins in the cell. The chain is Small ribosomal subunit protein eS1 (rps3a) from Oryzias latipes (Japanese rice fish).